Here is a 249-residue protein sequence, read N- to C-terminus: Type-1Aa cytolytic delta-endotoxin (249 aa).

This sequence belongs to the cyt1/cyt2 endotoxin family. In terms of processing, active after proteolytic processing.

Kills the larvae of dipteran insects by making pores in the epithelial cell membrane of the insect midgut. Acts on mosquitos and black flies. The chain is Type-1Aa cytolytic delta-endotoxin (cyt1Aa) from Bacillus thuringiensis subsp. morrisoni.